The primary structure comprises 523 residues: MAAALQVLPCLLRAPSRPFLWGPPVARMTSGMALAEQARQLFDSAVGAVQPGPMLQRTLSLDPSGKQLKVRDRTFQLQENLYLVGFGKAVLGMAAAADELLGQHLVQGVISVPKGIRAAVELAGKQEMLLKPHSHIQVFEGAEDNLPDRDALRAAQAIQQLAERLTADDLLLVLISGGGSALLPAPIPPVTLEEKQTLTKLLAARGATIQELNTIRKALSQLKGGGLAQAAYPAQVVSLILSDVIGDPLEVIASGPTVASTHSVQDCLHILNHYGLRAALPRSVKTVLSRADSDPHGPHTCGHVLNVIIGSNSLALAEAQRQAEVLGYHAMVLSTAMQGDVRRVAQFYGLLARVAAACLTSSTAERPLEEEAKLHQLAAELQLPDLQLEEALEAVAKAKGPVCLLAGGEPTVQLQGSGKGGRNQELALRVGAELGKQPLGPVDVLFLSGGTDGQDGPTKVAGAWVMSDLVSQASAENLDFATFLDNNDSYTFFCSFQGGTHLLHTGLTGTNVMDVHLLVFHPQ.

Ser-60 is modified (phosphoserine). Lys-200 is subject to N6-acetyllysine.

The protein belongs to the glycerate kinase type-2 family.

It localises to the cytoplasm. The enzyme catalyses (R)-glycerate + ATP = (2R)-3-phosphoglycerate + ADP + H(+). This is Glycerate kinase (Glyctk) from Rattus norvegicus (Rat).